The sequence spans 415 residues: Corticotropin-releasing factor receptor 1 (415 aa).

The N-terminal stretch at 1–24 is a signal peptide; sequence MLLAKTPCLLLVQVIAAGISFALT. Topologically, residues 25-111 are extracellular; sequence SLQDQCETLQ…CQEILKQEKK (87 aa). Cystine bridges form between C30/C54, C44/C87, and C68/C102. N-linked (GlcNAc...) asparagine glycosylation is found at N38, N45, N78, and N90. A helical membrane pass occupies residues 112–142; sequence TKVHYHIAIVINFLGHSISLCALLVAFILFL. Residues 143-149 are Cytoplasmic-facing; the sequence is RLRSIRC. A helical transmembrane segment spans residues 150 to 174; sequence LRNIIHWNLITAFILRNVTWFVMQL. Residues 175-189 lie on the Extracellular side of the membrane; it reads TLSHEAHDSNVVWCR. Cysteines 188 and 258 form a disulfide. The chain crosses the membrane as a helical span at residues 190–218; the sequence is LVTIAHNYFYVTNFFWMFGEGCYLHTAIV. The Cytoplasmic segment spans residues 219 to 225; it reads LTYSTDK. Residues 226–253 form a helical membrane-spanning segment; that stretch reads LRKWMFICIGWCIPFPIIVAWAIGKLYY. At 254–269 the chain is on the extracellular side; sequence DNEKCWFGKKAGVYTD. The chain crosses the membrane as a helical span at residues 270 to 295; it reads FIYQGPVILVLLINFIFLFNIVRILM. Residues 296–306 are Cytoplasmic-facing; the sequence is TKLRASTTSET. Residues 307 to 331 form a helical membrane-spanning segment; it reads IQYRKAVKATLVLLPLLGITYMLFF. Over 332–338 the chain is Extracellular; that stretch reads VTPGEDE. The chain crosses the membrane as a helical span at residues 339–368; that stretch reads ISRIVFIYFNSFLQSFQGFFVSVFYCFLNS. At 369–415 the chain is on the cytoplasmic side; it reads EVRSAVRKRWHRWQDKHSIRARVARAMSIPTSPTRISFHSIKQSSAI.

This sequence belongs to the G-protein coupled receptor 2 family. Interacts (via N-terminal extracellular domain) with CRF and UCN.

It localises to the cell membrane. Functionally, G-protein coupled receptor for CRH (corticotropin-releasing factor) and UCN (urocortin). Has high affinity for CRH and UCN. Ligand binding causes a conformation change that triggers signaling via guanine nucleotide-binding proteins (G proteins) and down-stream effectors, such as adenylate cyclase. Promotes the activation of adenylate cyclase, leading to increased intracellular cAMP levels. The protein is Corticotropin-releasing factor receptor 1 (crhr1) of Xenopus laevis (African clawed frog).